A 466-amino-acid chain; its full sequence is Glutamate decarboxylase alpha (466 aa).

The substrate site is built by T62 and N83. Residues 126-127 (SS), T212, and H275 contribute to the pyridoxal 5'-phosphate site. The residue at position 276 (K276) is an N6-(pyridoxal phosphate)lysine.

This sequence belongs to the group II decarboxylase family. As to quaternary structure, homohexamer. It depends on pyridoxal 5'-phosphate as a cofactor.

It catalyses the reaction L-glutamate + H(+) = 4-aminobutanoate + CO2. Functionally, converts glutamate to gamma-aminobutyrate (GABA), consuming one intracellular proton in the reaction. The gad system helps to maintain a near-neutral intracellular pH when cells are exposed to extremely acidic conditions. The ability to survive transit through the acidic conditions of the stomach is essential for successful colonization of the mammalian host by commensal and pathogenic bacteria. The protein is Glutamate decarboxylase alpha (gadA) of Escherichia coli O6:H1 (strain CFT073 / ATCC 700928 / UPEC).